A 131-amino-acid polypeptide reads, in one-letter code: Glycine cleavage system H protein (131 aa).

One can recognise a Lipoyl-binding domain in the interval R24 to E106. Position 65 is an N6-lipoyllysine (K65).

It belongs to the GcvH family. As to quaternary structure, the glycine cleavage system is composed of four proteins: P, T, L and H. The cofactor is (R)-lipoate.

The glycine cleavage system catalyzes the degradation of glycine. The H protein shuttles the methylamine group of glycine from the P protein to the T protein. This is Glycine cleavage system H protein from Xanthomonas axonopodis pv. citri (strain 306).